Here is a 304-residue protein sequence, read N- to C-terminus: 4-diphosphocytidyl-2-C-methyl-D-erythritol kinase (304 aa).

Lys-18 is an active-site residue. 103-113 contributes to the ATP binding site; that stretch reads PVAAGIGGGSA. Asp-145 is a catalytic residue.

Belongs to the GHMP kinase family. IspE subfamily.

The catalysed reaction is 4-CDP-2-C-methyl-D-erythritol + ATP = 4-CDP-2-C-methyl-D-erythritol 2-phosphate + ADP + H(+). The protein operates within isoprenoid biosynthesis; isopentenyl diphosphate biosynthesis via DXP pathway; isopentenyl diphosphate from 1-deoxy-D-xylulose 5-phosphate: step 3/6. Functionally, catalyzes the phosphorylation of the position 2 hydroxy group of 4-diphosphocytidyl-2C-methyl-D-erythritol. This chain is 4-diphosphocytidyl-2-C-methyl-D-erythritol kinase, found in Rhodospirillum rubrum (strain ATCC 11170 / ATH 1.1.1 / DSM 467 / LMG 4362 / NCIMB 8255 / S1).